Reading from the N-terminus, the 810-residue chain is Protein kinase C-binding protein NELL1 (810 aa).

A signal peptide spans 1-21; the sequence is MPMDVILVLWFCVCTARTVLG. 6 N-linked (GlcNAc...) asparagine glycosylation sites follow: Asn-40, Asn-53, Asn-83, Asn-224, Asn-294, and Asn-372. The 171-residue stretch at 57–227 folds into the Laminin G-like domain; that stretch reads AFLFQDVQRE…TQCPNLNRTC (171 aa). A VWFC 1 domain is found at 271–332; it reads KTCQVSGLLY…ISGQCCKVCR (62 aa). Disulfide bonds link Cys-395–Cys-407, Cys-401–Cys-416, and Cys-418–Cys-432. Ca(2+) contacts are provided by Asp-434, Ile-435, and Glu-437. The EGF-like 1; calcium-binding domain maps to 434–475; it reads DIDECAAKMHYCHANTVCVNLPGLYRCDCVPGYIRVDDFSCT. 15 disulfides stabilise this stretch: Cys-438–Cys-451, Cys-445–Cys-460, Cys-462–Cys-474, Cys-480–Cys-493, Cys-487–Cys-502, Cys-504–Cys-515, Cys-519–Cys-529, Cys-523–Cys-535, Cys-537–Cys-546, Cys-553–Cys-566, Cys-560–Cys-575, Cys-577–Cys-594, Cys-600–Cys-613, Cys-607–Cys-622, and Cys-624–Cys-630. 3 residues coordinate Ca(2+): Asn-453, Leu-454, and Leu-457. The EGF-like 2; calcium-binding domain maps to 476–516; that stretch reads EHDDCGSGQHNCDKNAICTNTVQGHSCTCQPGYVGNGTICK. Residue Asn-511 is glycosylated (N-linked (GlcNAc...) asparagine). The EGF-like 3 domain occupies 517–547; sequence AFCEEGCRYGGTCVAPNKCVCPSGFTGSHCE. Residues 549–587 form the EGF-like 4; calcium-binding domain; sequence DIDECAEGFVECHNHSRCVNLPGWYHCECRSGFHDDGTY. The N-linked (GlcNAc...) asparagine glycan is linked to Asn-562. The 36-residue stretch at 596–631 folds into the EGF-like 5; calcium-binding domain; the sequence is DIDECALRTHTCWNDSACINLAGGFDCLCPSGPSCS. Asn-609 carries an N-linked (GlcNAc...) asparagine glycan. 2 VWFC domains span residues 632-687 and 692-750; these read GDCP…PECD and SQCL…PRCV. Asn-708 carries an N-linked (GlcNAc...) asparagine glycan.

As to quaternary structure, interacts with ATRAID; the interaction promotes osteoblast cell differentiation and mineralization. Homotrimer. Binds to PKC beta-1. Interacts with ROBO3.

It is found in the cytoplasm. It localises to the nucleus envelope. The protein localises to the secreted. Its function is as follows. Plays a role in the control of cell growth and differentiation. Promotes osteoblast cell differentiation and terminal mineralization. The polypeptide is Protein kinase C-binding protein NELL1 (Nell1) (Rattus norvegicus (Rat)).